A 400-amino-acid polypeptide reads, in one-letter code: D(3) dopamine receptor (400 aa).

Residues 1–32 (MASLSQLSGHLNYTCGAENSTGASQARPHAYY) are Extracellular-facing. N-linked (GlcNAc...) asparagine glycans are attached at residues asparagine 12 and asparagine 19. A helical transmembrane segment spans residues 33 to 55 (ALSYCALILAIVFGNGLVCMAVL). The Cytoplasmic segment spans residues 56 to 65 (KERALQTTTN). Residues 66–88 (YLVVSLAVADLLVATLVMPWVVY) traverse the membrane as a helical segment. At 89 to 104 (LEVTGGVWNFSRICCD) the chain is on the extracellular side. Asparagine 97 is a glycosylation site (N-linked (GlcNAc...) asparagine). Cysteines 103 and 181 form a disulfide. A helical transmembrane segment spans residues 105 to 126 (VFVTLDVMMCTASILNLCAISI). Position 110 (aspartate 110) interacts with eticlopride. At 127–149 (DRYTAVVMPVHYQHGTGQSSCRR) the chain is on the cytoplasmic side. The chain crosses the membrane as a helical span at residues 150–170 (VALMITAVWVLAFAVSCPLLF). Residues 171–187 (GFNTTGDPTVCSISNPD) are Extracellular-facing. A glycan (N-linked (GlcNAc...) asparagine) is linked at asparagine 173. A helical membrane pass occupies residues 188-209 (FVIYSSVVSFYLPFGVTVLVYA). Topologically, residues 210–329 (RIYVVLKQRR…VPLREKKATQ (120 aa)) are cytoplasmic. Residues 330-351 (MVAIVLGAFIVCWLPFFLTHVL) traverse the membrane as a helical segment. Eticlopride-binding residues include phenylalanine 345 and histidine 349. The Extracellular portion of the chain corresponds to 352 to 366 (NTHCQTCHVSPELYS). Cysteines 355 and 358 form a disulfide. The helical transmembrane segment at 367-386 (ATTWLGYVNSALNPVIYTTF) threads the bilayer. The Cytoplasmic portion of the chain corresponds to 387–400 (NIEFRKAFLKILSC).

It belongs to the G-protein coupled receptor 1 family. As to quaternary structure, interacts with CLIC6. Interacts with GRK4. Interacts with PALM. Interacts with FLNA (via filamin repeat 21); increases PKA-mediated phosphorylation of FLNA. Post-translationally, phosphorylated by GRK4 (GRK4-alpha and GRK4-gamma). In terms of processing, palmitoylated. As to expression, brain.

The protein resides in the cell membrane. Dopamine receptor whose activity is mediated by G proteins which inhibit adenylyl cyclase. Promotes cell proliferation. This Homo sapiens (Human) protein is D(3) dopamine receptor.